A 386-amino-acid polypeptide reads, in one-letter code: Succinate--CoA ligase [ADP-forming] subunit beta (386 aa).

The ATP-grasp domain occupies 9 to 244 (KEILHKFNVP…YDEEVKEEIE (236 aa)). Residues Lys46, 53-55 (GRG), Glu99, Ser102, and Glu107 contribute to the ATP site. Asn199 and Asp213 together coordinate Mg(2+). Substrate-binding positions include Asn264 and 321 to 323 (GIM).

It belongs to the succinate/malate CoA ligase beta subunit family. Heterotetramer of two alpha and two beta subunits. It depends on Mg(2+) as a cofactor.

The enzyme catalyses succinate + ATP + CoA = succinyl-CoA + ADP + phosphate. It carries out the reaction GTP + succinate + CoA = succinyl-CoA + GDP + phosphate. The protein operates within carbohydrate metabolism; tricarboxylic acid cycle; succinate from succinyl-CoA (ligase route): step 1/1. Succinyl-CoA synthetase functions in the citric acid cycle (TCA), coupling the hydrolysis of succinyl-CoA to the synthesis of either ATP or GTP and thus represents the only step of substrate-level phosphorylation in the TCA. The beta subunit provides nucleotide specificity of the enzyme and binds the substrate succinate, while the binding sites for coenzyme A and phosphate are found in the alpha subunit. This Wolbachia sp. subsp. Brugia malayi (strain TRS) protein is Succinate--CoA ligase [ADP-forming] subunit beta.